The chain runs to 150 residues: Macrodomain Ter protein (150 aa).

This sequence belongs to the MatP family. As to quaternary structure, homodimer.

It localises to the cytoplasm. Required for spatial organization of the terminus region of the chromosome (Ter macrodomain) during the cell cycle. Prevents early segregation of duplicated Ter macrodomains during cell division. Binds specifically to matS, which is a 13 bp signature motif repeated within the Ter macrodomain. In Erwinia tasmaniensis (strain DSM 17950 / CFBP 7177 / CIP 109463 / NCPPB 4357 / Et1/99), this protein is Macrodomain Ter protein.